The following is a 329-amino-acid chain: Fructose-1,6-bisphosphatase class 1 2 (329 aa).

Positions 92, 111, 113, and 114 each coordinate Mg(2+). Residues aspartate 114–serine 117 and asparagine 206 each bind substrate. Residue glutamate 278 coordinates Mg(2+).

The protein belongs to the FBPase class 1 family. In terms of assembly, homotetramer. Requires Mg(2+) as cofactor.

Its subcellular location is the cytoplasm. The catalysed reaction is beta-D-fructose 1,6-bisphosphate + H2O = beta-D-fructose 6-phosphate + phosphate. The protein operates within carbohydrate biosynthesis; gluconeogenesis. This chain is Fructose-1,6-bisphosphatase class 1 2, found in Xanthobacter autotrophicus (strain ATCC BAA-1158 / Py2).